An 827-amino-acid polypeptide reads, in one-letter code: Villin-1 (827 aa).

The segment at 1–126 (MTKLNAQVKG…IRKGGVASGM (126 aa)) is necessary for homodimerization. The interval 1–734 (MTKLNAQVKG…YEDLKAELGN (734 aa)) is core. One copy of the Gelsolin-like 1 repeat lies at 28–107 (QMVPVSSSTY…EVQGNESEAF (80 aa)). 2 LPA/PIP2-binding site regions span residues 112 to 119 (KQGIVIRK) and 138 to 146 (RLLHVKGKR). 2 Gelsolin-like repeats span residues 148–216 (VVAG…GEDE) and 269–342 (EVAT…SAVF). Ser366 is subject to Phosphoserine. Gelsolin-like repeat units lie at residues 409-489 (DLVP…PHLM), 528-595 (TKAF…ANFW), and 634-707 (TEIP…PPTF). Position 735 is a phosphoserine (Ser735). An HP domain is found at 761–827 (SGPLPIFPLE…QNLKKEKGLF (67 aa)). Positions 816 to 824 (KQQNLKKEK) are LPA/PIP2-binding site 3.

This sequence belongs to the villin/gelsolin family. In terms of assembly, monomer. Homodimer; homodimerization is necessary for actin-bundling. Associates with F-actin; phosphorylation at tyrosine residues decreases the association with F-actin. Interacts (phosphorylated at C-terminus tyrosine phosphorylation sites) with PLCG1 (via the SH2 domains). Interacts (phosphorylated form) with PLCG1; the interaction is enhanced by hepatocyte growth factor (HGF). Post-translationally, phosphorylated on tyrosine residues by SRC. The unphosphorylated form increases the initial rate of actin-nucleating activity, whereas the tyrosine-phosphorylated form inhibits actin-nucleating activity, enhances actin-bundling activity and enhances actin-severing activity by reducing high Ca(2+) requirements. The tyrosine-phosphorylated form does not regulate actin-capping activity. Tyrosine phosphorylation is essential for cell migration: tyrosine phosphorylation sites in the N-terminus half regulate actin reorganization and cell morphology, whereas tyrosine phosphorylation sites in the C-terminus half regulate cell migration. Tyrosine phosphorylation is induced by epidermal growth factor (EGF) and stimulates cell migration.

The protein localises to the cytoplasm. It is found in the cytoskeleton. It localises to the cell projection. The protein resides in the lamellipodium. Its subcellular location is the ruffle. The protein localises to the microvillus. It is found in the filopodium tip. It localises to the filopodium. In terms of biological role, epithelial cell-specific Ca(2+)-regulated actin-modifying protein that modulates the reorganization of microvillar actin filaments. Plays a role in the actin nucleation, actin filament bundle assembly, actin filament capping and severing. Binds phosphatidylinositol 4,5-bisphosphate (PIP2) and lysophosphatidic acid (LPA); binds LPA with higher affinity than PIP2. Binding to LPA increases its phosphorylation by SRC and inhibits all actin-modifying activities. Binding to PIP2 inhibits actin-capping and -severing activities but enhances actin-bundling activity. Regulates the intestinal epithelial cell morphology, cell invasion, cell migration and apoptosis. Protects against apoptosis induced by dextran sodium sulfate (DSS) in the gastrointestinal epithelium. Appears to regulate cell death by maintaining mitochondrial integrity. Enhances hepatocyte growth factor (HGF)-induced epithelial cell motility, chemotaxis and wound repair. This chain is Villin-1 (VIL1), found in Sus scrofa (Pig).